Reading from the N-terminus, the 67-residue chain is Protein AaeX (67 aa).

Transmembrane regions (helical) follow at residues 3–23 (LLPV…ELLI) and 39–59 (GIYE…CCLF).

The protein belongs to the AaeX family.

The protein resides in the cell membrane. This is Protein AaeX from Yersinia pseudotuberculosis serotype O:1b (strain IP 31758).